A 1066-amino-acid polypeptide reads, in one-letter code: Ankyrin repeat protein nuc-2 (1066 aa).

The SPX domain maps to 1–166 (MKFGKQIQKR…KSKTKELYLS (166 aa)). 7 ANK repeats span residues 268–298 (RVTRTFLASINEGSLEALKVLLDTGLVDIQS), 336–366 (YGRVPLHYASMHGRLDMIDALLNASPKTINL), 370–399 (DNFTPLVHSIVRNHLECVGRLLERSARIDP), 403–432 (TDHVPLNLACQHGSVAIVELLLKHGAKILA), 435–465 (EGLYPQHLVARSGQTPEILVLLKQYGADLDQ), 470–499 (YGWTPLVHAASEGNVPCLQALLETGADPNI), and 503–532 (KDLPAMYYAAWEGHLECMKLLTPAKKEKAA). Residues 717-1048 (ITDFETYWKA…DPFPKLPKGV (332 aa)) form the GP-PDE domain. The segment at 923–963 (KQQQQGSCSKGDGDEDMGGTTAASRREAADERTLQSDGRRT) is disordered. A compositionally biased stretch (basic and acidic residues) spans 946 to 962 (SRREAADERTLQSDGRR).

Controls phosphorus acquisition. The polypeptide is Ankyrin repeat protein nuc-2 (nuc-2) (Neurospora crassa (strain ATCC 24698 / 74-OR23-1A / CBS 708.71 / DSM 1257 / FGSC 987)).